A 180-amino-acid chain; its full sequence is MDLEKLKKDTQVIIDDVIKQTEIKAGQVFVLGLSSSEVNGGLIGHASSSEIGQVIVSVIHKTLSDKGIYLAVQACEHLNRALLIEEELAEKKDWEIVSVIPQLHAGGSGQVAAYQLFKSPVEVEHIVANAGLDIGDTSIGMHVKHVQIPVRPILRELGGAHVTALKSRPKLIGGERARYK.

Belongs to the UPF0340 family.

This Lactococcus lactis subsp. lactis (strain IL1403) (Streptococcus lactis) protein is UPF0340 protein LL0489 (yeiF).